Consider the following 585-residue polypeptide: Glutamine--tRNA ligase (585 aa).

Residues 51-61 (PEPNGYLHIGH) carry the 'HIGH' region motif. ATP is bound by residues 52 to 54 (EPN) and 58 to 64 (HIGHAKS). 2 residues coordinate L-glutamine: aspartate 84 and tyrosine 238. Residues threonine 257 and 292-293 (RL) each bind ATP. The 'KMSKS' region signature appears at 299–303 (ITSKR).

Belongs to the class-I aminoacyl-tRNA synthetase family. In terms of assembly, monomer.

The protein resides in the cytoplasm. The enzyme catalyses tRNA(Gln) + L-glutamine + ATP = L-glutaminyl-tRNA(Gln) + AMP + diphosphate. This Cupriavidus necator (strain ATCC 17699 / DSM 428 / KCTC 22496 / NCIMB 10442 / H16 / Stanier 337) (Ralstonia eutropha) protein is Glutamine--tRNA ligase.